The following is a 796-amino-acid chain: ER degradation-enhancing alpha-mannosidase-like protein 1 (796 aa).

The N-terminal stretch at 1-20 is a signal peptide; sequence MVCCLWVLLALLLHLDHVAC. The N-linked (GlcNAc...) asparagine glycan is linked to N86. The Proton donor role is filled by E372. Ca(2+) is bound at residue T495. 3 N-linked (GlcNAc...) asparagine glycosylation sites follow: N517, N672, and N762.

This sequence belongs to the glycosyl hydrolase 47 family. Interacts with PDI1. The cofactor is Ca(2+).

It is found in the endoplasmic reticulum lumen. It catalyses the reaction Hydrolysis of terminal, non-reducing alpha-D-mannose residues in alpha-D-mannosides.. It functions in the pathway protein modification; protein glycosylation. Alpha-1,2-specific exomannosidase involved in endoplasmic reticulum-associated degradation (ERAD). Delivers misfolded glycoproteins to proteasomes. Forms a complex with PDI1 to process unfolded protein-bound Man8GlcNAc2 oligosaccharides to Man7GlcNAc2, promoting degradation in unfolded protein response. The sequence is that of ER degradation-enhancing alpha-mannosidase-like protein 1 (MNL1) from Saccharomyces cerevisiae (strain ATCC 204508 / S288c) (Baker's yeast).